Consider the following 134-residue polypeptide: Transmembrane protein 100 (134 aa).

Serine 15 is modified (phosphoserine). Transmembrane regions (helical) follow at residues 56–76 (CVIP…AVAY) and 84–104 (IISI…ASSA). The residue at position 121 (serine 121) is a Phosphoserine.

Interacts (via C-terminus) with TRPA1 and TRPV1. Interacts with TASOR.

The protein localises to the cell membrane. Its subcellular location is the membrane. It localises to the perikaryon. It is found in the cytoplasm. The protein resides in the perinuclear region. The protein localises to the endoplasmic reticulum. Its function is as follows. Plays a role during embryonic arterial endothelium differentiation and vascular morphogenesis through the ACVRL1 receptor-dependent signaling pathway upon stimulation by bone morphogenetic proteins, such as GDF2/BMP9 and BMP10. Involved in the regulation of nociception, acting as a modulator of the interaction between TRPA1 and TRPV1, two molecular sensors and mediators of pain signals in dorsal root ganglia (DRG) neurons. Mechanistically, it weakens their interaction, thereby releasing the inhibition of TRPA1 by TRPV1 and increasing the single-channel open probability of the TRPA1-TRPV1 complex. The chain is Transmembrane protein 100 (TMEM100) from Bos taurus (Bovine).